Reading from the N-terminus, the 185-residue chain is Adenine phosphoribosyltransferase (185 aa).

This sequence belongs to the purine/pyrimidine phosphoribosyltransferase family. Homodimer.

It is found in the cytoplasm. It carries out the reaction AMP + diphosphate = 5-phospho-alpha-D-ribose 1-diphosphate + adenine. The protein operates within purine metabolism; AMP biosynthesis via salvage pathway; AMP from adenine: step 1/1. In terms of biological role, catalyzes a salvage reaction resulting in the formation of AMP, that is energically less costly than de novo synthesis. The sequence is that of Adenine phosphoribosyltransferase from Corynebacterium glutamicum (strain ATCC 13032 / DSM 20300 / JCM 1318 / BCRC 11384 / CCUG 27702 / LMG 3730 / NBRC 12168 / NCIMB 10025 / NRRL B-2784 / 534).